Consider the following 342-residue polypeptide: Biotin synthase (342 aa).

Residues 38-262 (GQVQISTLLS…MMPTSYVRLS (225 aa)) form the Radical SAM core domain. [4Fe-4S] cluster contacts are provided by Cys53, Cys57, and Cys60. The [2Fe-2S] cluster site is built by Cys97, Cys128, Cys188, and Arg260.

This sequence belongs to the radical SAM superfamily. Biotin synthase family. Homodimer. It depends on [4Fe-4S] cluster as a cofactor. Requires [2Fe-2S] cluster as cofactor.

The catalysed reaction is (4R,5S)-dethiobiotin + (sulfur carrier)-SH + 2 reduced [2Fe-2S]-[ferredoxin] + 2 S-adenosyl-L-methionine = (sulfur carrier)-H + biotin + 2 5'-deoxyadenosine + 2 L-methionine + 2 oxidized [2Fe-2S]-[ferredoxin]. The protein operates within cofactor biosynthesis; biotin biosynthesis; biotin from 7,8-diaminononanoate: step 2/2. Catalyzes the conversion of dethiobiotin (DTB) to biotin by the insertion of a sulfur atom into dethiobiotin via a radical-based mechanism. This chain is Biotin synthase, found in Baumannia cicadellinicola subsp. Homalodisca coagulata.